The following is a 66-amino-acid chain: Large ribosomal subunit protein uL29 (66 aa).

It belongs to the universal ribosomal protein uL29 family.

This Sinorhizobium fredii (strain NBRC 101917 / NGR234) protein is Large ribosomal subunit protein uL29.